We begin with the raw amino-acid sequence, 135 residues long: Large ribosomal subunit protein uL16c (135 aa).

Belongs to the universal ribosomal protein uL16 family. In terms of assembly, part of the 50S ribosomal subunit.

It is found in the plastid. Its subcellular location is the chloroplast. This chain is Large ribosomal subunit protein uL16c, found in Drimys granadensis.